Reading from the N-terminus, the 254-residue chain is Thiazole synthase (254 aa).

Lys-95 serves as the catalytic Schiff-base intermediate with DXP. 1-deoxy-D-xylulose 5-phosphate contacts are provided by residues Gly-156, 182–183 (AG), and 204–205 (NT).

This sequence belongs to the ThiG family. Homotetramer. Forms heterodimers with either ThiH or ThiS.

It localises to the cytoplasm. It catalyses the reaction [ThiS sulfur-carrier protein]-C-terminal-Gly-aminoethanethioate + 2-iminoacetate + 1-deoxy-D-xylulose 5-phosphate = [ThiS sulfur-carrier protein]-C-terminal Gly-Gly + 2-[(2R,5Z)-2-carboxy-4-methylthiazol-5(2H)-ylidene]ethyl phosphate + 2 H2O + H(+). It participates in cofactor biosynthesis; thiamine diphosphate biosynthesis. Its function is as follows. Catalyzes the rearrangement of 1-deoxy-D-xylulose 5-phosphate (DXP) to produce the thiazole phosphate moiety of thiamine. Sulfur is provided by the thiocarboxylate moiety of the carrier protein ThiS. In vitro, sulfur can be provided by H(2)S. This Shewanella baltica (strain OS223) protein is Thiazole synthase.